The sequence spans 236 residues: Mammalian ependymin-related protein 1 (236 aa).

Residues 1–35 (MPRRAPLRVARGSLDAWLLGGLWVCALGCLCGVGM) form the signal peptide. Disulfide bonds link C54–C184, C100–C234, and C125–C222. N-linked (GlcNAc...) asparagine glycans are attached at residues N142 and N194.

This sequence belongs to the ependymin family. In terms of assembly, homodimer. N-glycosylated; the glycan contains mannose-6-phosphate moieties.

It localises to the lysosome lumen. It is found in the secreted. In terms of biological role, binds anionic lipids and gangliosides at acidic pH. The chain is Mammalian ependymin-related protein 1 (EPDR1) from Bos taurus (Bovine).